Here is a 172-residue protein sequence, read N- to C-terminus: Signal peptidase complex catalytic subunit SEC11 (172 aa).

At 1-14 the chain is on the cytoplasmic side; the sequence is MLSGLQNPRQAAAQ. A helical; Signal-anchor for type II membrane protein transmembrane segment spans residues 15–35; that stretch reads LMNFALILSTAFMMWKGLSVA. Over 36-172 the chain is Lumenal; that stretch reads TDSPSPIVVV…MGLLVVIQRE (137 aa). Residues S49, H90, and D115 each act as charge relay system in the active site. The C-terminal short (CTS) helix stretch occupies residues 158–169; sequence VMLGIMGLLVVI.

It belongs to the peptidase S26B family. Component of the signal peptidase complex (SPC) composed of a catalytic subunit SEC11 and three accessory subunits SPC1, SPC2 and SPC3. The complex induces a local thinning of the ER membrane which is used to measure the length of the signal peptide (SP) h-region of protein substrates. This ensures the selectivity of the complex towards h-regions shorter than 18-20 amino acids. SPC associates with the translocon complex.

The protein resides in the endoplasmic reticulum membrane. The enzyme catalyses Cleavage of hydrophobic, N-terminal signal or leader sequences from secreted and periplasmic proteins.. In terms of biological role, catalytic component of the signal peptidase complex (SPC) which catalyzes the cleavage of N-terminal signal sequences from nascent proteins as they are translocated into the lumen of the endoplasmic reticulum. Specifically cleaves N-terminal signal peptides that contain a hydrophobic alpha-helix (h-region) shorter than 18-20 amino acids. This is Signal peptidase complex catalytic subunit SEC11 (SEC11) from Metarhizium acridum (strain CQMa 102).